Here is a 190-residue protein sequence, read N- to C-terminus: CASP-like protein 1U3 (190 aa).

Residues 1-24 (MNGATVQPSYKEAGPVRYHPMHDC) lie on the Cytoplasmic side of the membrane. A helical transmembrane segment spans residues 25 to 45 (LSLILRLLTLGATIAAIVAML). The Extracellular segment spans residues 46-70 (KSTQTVPTLLGPHTARWKDFPAFEW). A helical membrane pass occupies residues 71–91 (FVIGNSIVLVYAALGTLAACL). Residues 92–113 (SLFTRRGPLSYTKTAWLTFLCD) are Cytoplasmic-facing. Residues 114–134 (FICSCALISAGSTALGVAWIG) form a helical membrane-spanning segment. Over 135–158 (KHGQHSAFWNAVCPTVDRFCDYVQ) the chain is Extracellular. A helical transmembrane segment spans residues 159–179 (GALIATLCGFIFQALSTVIAA). At 180–190 (SALHNLATHRH) the chain is on the cytoplasmic side.

It belongs to the Casparian strip membrane proteins (CASP) family. As to quaternary structure, homodimer and heterodimers.

It localises to the cell membrane. In Physcomitrium patens (Spreading-leaved earth moss), this protein is CASP-like protein 1U3.